A 108-amino-acid polypeptide reads, in one-letter code: MVTLLPIEGQEIHFFEILESECVLYTGWIERASGSSIYPEAKARLPLEALLGSNKEPMLPKETVLSLKRYNLGSSAMKRNVPGHVLQRPSYLTRIQVTLLCNSSAEAL.

The BH3-like signature appears at 5 to 12 (LPIEGQEI).

Ubiquitously expressed.

The protein resides in the cytoplasm. The protein localises to the mitochondrion. Functions as a proapoptotic molecule through the caspase-dependent mitochondrial pathway of cell death. The protein is BH3-like motif-containing cell death inducer (BLID) of Homo sapiens (Human).